The following is a 397-amino-acid chain: Multidrug efflux pump subunit AcrA (397 aa).

An N-terminal signal peptide occupies residues 1 to 24 (MNKNRGFTPLAVVLMLSGSLALTG). The N-palmitoyl cysteine moiety is linked to residue Cys25. A lipid anchor (S-diacylglycerol cysteine) is attached at Cys25. The stretch at 98-172 (PATYQATYDS…AVETARINLA (75 aa)) forms a coiled coil. Residues 377 to 397 (EVTADNNQQAASGAQPEQSKS) form a disordered region. The segment covering 379–397 (TADNNQQAASGAQPEQSKS) has biased composition (polar residues).

This sequence belongs to the membrane fusion protein (MFP) (TC 8.A.1) family. Monomeric in solution. Homotrimeric; interacts independently with AcrB and TolC as well as AcrZ. Part of the AcrA-AcrB-TolC efflux pump.

It is found in the cell inner membrane. Functionally, acrA-AcrB-AcrZ-TolC is a drug efflux protein complex with broad substrate specificity that uses the proton motive force to export substrates. This subunit may act as an adapter protein that links AcrB and TolC stably together. The protein is Multidrug efflux pump subunit AcrA (acrA) of Escherichia coli O157:H7.